Here is a 244-residue protein sequence, read N- to C-terminus: Venom nerve growth factor 1 (244 aa).

A signal peptide spans 1 to 18 (MSMLCYTLIIAFLIGIWA). The propeptide occupies 19-125 (APKSEDNVPL…TLNRNIRAKR (107 aa)). A compositionally biased stretch (basic and acidic residues) spans 47–66 (GLKTSRNTDQRHPAPKKAED). Residues 47-67 (GLKTSRNTDQRHPAPKKAEDQ) are disordered. Cystine bridges form between Cys-139/Cys-205, Cys-181/Cys-233, and Cys-193/Cys-235.

It belongs to the NGF-beta family. As to quaternary structure, homodimer; non-covalently linked. Expressed by the venom gland.

It is found in the secreted. Nerve growth factor is important for the development and maintenance of the sympathetic and sensory nervous systems. It stimulates division and differentiation of sympathetic and embryonic sensory neurons as well as basal forebrain cholinergic neurons in the brain. Its relevance in the snake venom is not clear. However, it has been shown to inhibit metalloproteinase-dependent proteolysis of platelet glycoprotein Ib alpha, suggesting a metalloproteinase inhibition to prevent metalloprotease autodigestion and/or protection against prey proteases. Binds a lipid between the two protein chains in the homodimer. The lipid-bound form promotes histamine relase from mouse mast cells, contrary to the lipid-free form. The protein is Venom nerve growth factor 1 of Notechis scutatus scutatus (Mainland tiger snake).